Here is a 907-residue protein sequence, read N- to C-terminus: Glutamate receptor 1 (907 aa).

A signal peptide spans 1–18; the sequence is MPYIFAFFCTGFLGAVVG. Residues 19 to 536 are Extracellular-facing; it reads ANFPNNIQIG…GVFSFLDPLA (518 aa). Asn63, Asn249, Asn257, Asn363, Asn401, and Asn406 each carry an N-linked (GlcNAc...) asparagine glycan. Cys75 and Cys323 are oxidised to a cystine. The L-glutamate site is built by Pro492, Thr494, and Arg499. A helical transmembrane segment spans residues 537–557; the sequence is YEIWMCIVFAYIGVSVVLFLV. The Cytoplasmic portion of the chain corresponds to 558-584; sequence SRFSPYEWHSEEFEEGRDQTTSDQSNE. The helical; Pore-forming intramembrane region spans 585–600; sequence FGIFNSLWFSLGAFMQ. The stretch at 601–603 is an intramembrane region; it reads QGC. Cys603 carries the S-palmitoyl cysteine lipid modification. The Cytoplasmic portion of the chain corresponds to 604–609; that stretch reads DISPRS. The chain crosses the membrane as a helical span at residues 610-630; it reads LSGRIVGGVWWFFTLIIISSY. The Extracellular segment spans residues 631-805; the sequence is TANLAAFLTV…DKTSALSLSN (175 aa). The residue at position 645 (Ser645) is a Phosphoserine. Positions 668 and 669 each coordinate L-glutamate. Ser710 carries the post-translational modification Phosphoserine. Glu719 serves as a coordination point for L-glutamate. Cys732 and Cys787 are joined by a disulfide. A helical transmembrane segment spans residues 806–826; sequence VAGVFYILIGGLGLAMLVALI. At 827 to 907 the chain is on the cytoplasmic side; the sequence is EFCYKSRSES…SGMPLGATGL (81 aa). A lipid anchor (S-palmitoyl cysteine) is attached at Cys829. Residues Ser849 and Ser863 each carry the phosphoserine modification. A disordered region spans residues 857 to 881; that stretch reads STLPRNSGAGASGGSGSGENGRVVS. A compositionally biased stretch (gly residues) spans 866–875; the sequence is GASGGSGSGE. The PDZ-binding signature appears at 904–907; sequence ATGL.

The protein belongs to the glutamate-gated ion channel (TC 1.A.10.1) family. GRIA1 subfamily. Homotetramer or heterotetramer of pore-forming glutamate receptor subunits. Heteromeric assembly can be the result of both receptor subtype and flip or flop form and according the composition, one partner can be dominant with respect to the fast desensitizing current component, whereas the other can determine the steady-state component. Tetramers may be formed by the dimerization of dimers. Found in a complex with GRIA2, GRIA3, GRIA4, CNIH2, CNIH3, CACNG2, CACNG3, CACNG4, CACNG5, CACNG7 and CACNG8. Interacts with HIP1 and RASGRF2. Interacts with SYNDIG1 and GRIA2. Interacts with DLG1 (via C-terminus). Interacts with LRFN1. Interacts with PRKG2. Interacts with CNIH2 and CACNG2. Interacts with CACNG5; this interaction modulates the gating. Interacts (via C-terminus) with PDLIM4 (via LIM domain); this interaction as well as the interaction of PDLIM4 with alpha-actinin is required for their colocalization in early endosomes. Interacts with SNX27 (via PDZ domain); the interaction is required for recycling to the plasma membrane when endocytosed and prevent degradation in lysosomes. Interacts (via PDZ-binding motif) with SHANK3 (via PDZ domain). Interacts with CACNG3; associates GRIA1 with the adapter protein complex 4 (AP-4) to target GRIA1 to the somatodendritic compartment of neurons. Interacts with CACNG2; this interaction mediates traffick to the plasma membrane and modulation of desensitization. Interacts with CNIH2 and CNIH3; this interaction promotes expression at the plasma membrane and extensively modulates their gating properties by slowing deactivation and desensitization kinetics. Found in a complex with GRIA2, GRIA3, GRIA4, DLG4, CACNG8 and CNIH2. Post-translationally, phosphorylated at Ser-645. Phosphorylated at Ser-710 by PKC. Phosphorylated at Ser-849 by PKC, PKA and CAMK2. Phosphorylated at Ser-863 by PKC, PKA and PRKG2. Phosphorylation of Ser-863 is reduced by induction of long-term depression and increased by induction of long-term potentiation. Palmitoylated. Depalmitoylated by CPT1C and upon L-glutamate stimulation. ZDHHC3/GODZ specifically palmitoylates Cys-603, which leads to Golgi retention and decreased cell surface expression. In contrast, Cys-829 palmitoylation does not affect cell surface expression but regulates stimulation-dependent endocytosis. As to expression, expressed in the outer plexiform layer of the retina of the eye (at protein level). Expressed in the forebrain and hippocampus (at protein level).

The protein localises to the cell membrane. The protein resides in the endoplasmic reticulum membrane. It localises to the postsynaptic cell membrane. Its subcellular location is the postsynaptic density membrane. It is found in the cell projection. The protein localises to the dendrite. The protein resides in the dendritic spine. It localises to the early endosome membrane. Its subcellular location is the recycling endosome membrane. It is found in the presynapse. The protein localises to the synapse. The catalysed reaction is Ca(2+)(in) = Ca(2+)(out). It catalyses the reaction Na(+)(in) = Na(+)(out). It carries out the reaction Mg(2+)(in) = Mg(2+)(out). The enzyme catalyses Li(+)(in) = Li(+)(out). The catalysed reaction is K(+)(in) = K(+)(out). It catalyses the reaction Sr(2+)(in) = Sr(2+)(out). Functionally, ionotropic glutamate receptor that functions as a ligand-gated cation channel, gated by L-glutamate and glutamatergic agonists such as alpha-amino-3-hydroxy-5-methyl-4-isoxazolepropionic acid (AMPA), quisqualic acid, and kainic acid. L-glutamate acts as an excitatory neurotransmitter at many synapses in the central nervous system. Binding of the excitatory neurotransmitter L-glutamate induces a conformation change, leading to the opening of the cation channel, and thereby converts the chemical signal to an electrical impulse upon entry of monovalent and divalent cations such as sodium and calcium. The receptor then desensitizes rapidly and enters in a transient inactive state, characterized by the presence of bound agonist. In the presence of CACNG2 or CACNG4 or CACNG7 or CACNG8, shows resensitization which is characterized by a delayed accumulation of current flux upon continued application of L-glutamate. Calcium (Ca(2+)) permeability depends on subunits composition and, heteromeric channels containing edited GRIA2 subunit are calcium-impermeable. Also permeable to other divalents cations such as strontium(2+) and magnesium(2+) and monovalent cations such as potassium(1+) and lithium(1+). This Mus musculus (Mouse) protein is Glutamate receptor 1.